Here is a 134-residue protein sequence, read N- to C-terminus: Ribosome-binding factor A (134 aa).

This sequence belongs to the RbfA family. As to quaternary structure, monomer. Binds 30S ribosomal subunits, but not 50S ribosomal subunits or 70S ribosomes.

The protein resides in the cytoplasm. Functionally, one of several proteins that assist in the late maturation steps of the functional core of the 30S ribosomal subunit. Associates with free 30S ribosomal subunits (but not with 30S subunits that are part of 70S ribosomes or polysomes). Required for efficient processing of 16S rRNA. May interact with the 5'-terminal helix region of 16S rRNA. In Rhizobium etli (strain CIAT 652), this protein is Ribosome-binding factor A.